Here is a 56-residue protein sequence, read N- to C-terminus: Large ribosomal subunit protein bL32 (56 aa).

Residues 1 to 56 are disordered; sequence MAVQQNRKTRSKRGMRRSHDALSAPTLSQDKETGTTHRRHHVAPDGFYRGRKVVDV. Positions 7-16 are enriched in basic residues; sequence RKTRSKRGMR.

The protein belongs to the bacterial ribosomal protein bL32 family.

The protein is Large ribosomal subunit protein bL32 of Chromohalobacter salexigens (strain ATCC BAA-138 / DSM 3043 / CIP 106854 / NCIMB 13768 / 1H11).